The following is a 282-amino-acid chain: 4-diphosphocytidyl-2-C-methyl-D-erythritol kinase (282 aa).

The active site involves Lys15. 98–108 is a binding site for ATP; that stretch reads PMGGGVGGGSS. The active site involves Asp140.

The protein belongs to the GHMP kinase family. IspE subfamily.

The enzyme catalyses 4-CDP-2-C-methyl-D-erythritol + ATP = 4-CDP-2-C-methyl-D-erythritol 2-phosphate + ADP + H(+). Its pathway is isoprenoid biosynthesis; isopentenyl diphosphate biosynthesis via DXP pathway; isopentenyl diphosphate from 1-deoxy-D-xylulose 5-phosphate: step 3/6. Its function is as follows. Catalyzes the phosphorylation of the position 2 hydroxy group of 4-diphosphocytidyl-2C-methyl-D-erythritol. The chain is 4-diphosphocytidyl-2-C-methyl-D-erythritol kinase from Azoarcus sp. (strain BH72).